The chain runs to 585 residues: Glutamate decarboxylase 2 (585 aa).

The interval 1 to 24 (MASPGSGFWSFGSEDGSGDPENSG) is disordered. Residues serine 3, serine 6, serine 10, and serine 13 each carry the phosphoserine modification. S-palmitoyl cysteine attachment occurs at residues cysteine 30 and cysteine 45. 181-183 (QLS) serves as a coordination point for substrate. Position 396 is an N6-(pyridoxal phosphate)lysine (lysine 396). Position 558 (arginine 558) interacts with substrate.

Belongs to the group II decarboxylase family. Homodimer. Requires pyridoxal 5'-phosphate as cofactor. Phosphorylated; which does not affect kinetic parameters or subcellular location. In terms of processing, palmitoylated; which is required for presynaptic clustering.

The protein resides in the cytoplasm. It localises to the cytosol. It is found in the cytoplasmic vesicle. Its subcellular location is the presynaptic cell membrane. The protein localises to the golgi apparatus membrane. It carries out the reaction L-glutamate + H(+) = 4-aminobutanoate + CO2. In terms of biological role, catalyzes the production of GABA. This Sus scrofa (Pig) protein is Glutamate decarboxylase 2 (GAD2).